The primary structure comprises 434 residues: ATP-dependent protease ATPase subunit HslU (434 aa).

ATP is bound by residues Ile-18, 60 to 65 (GVGKTE), Asp-247, Glu-312, and Arg-384.

This sequence belongs to the ClpX chaperone family. HslU subfamily. In terms of assembly, a double ring-shaped homohexamer of HslV is capped on each side by a ring-shaped HslU homohexamer. The assembly of the HslU/HslV complex is dependent on binding of ATP.

The protein localises to the cytoplasm. In terms of biological role, ATPase subunit of a proteasome-like degradation complex; this subunit has chaperone activity. The binding of ATP and its subsequent hydrolysis by HslU are essential for unfolding of protein substrates subsequently hydrolyzed by HslV. HslU recognizes the N-terminal part of its protein substrates and unfolds these before they are guided to HslV for hydrolysis. The polypeptide is ATP-dependent protease ATPase subunit HslU (Sinorhizobium fredii (strain NBRC 101917 / NGR234)).